Here is a 294-residue protein sequence, read N- to C-terminus: uncharacterized protein (294 aa).

A disordered region spans residues 1–32 (MSHLKDPTTQYYTGEYPKQKQPTPGIQAKMTP). Residue lysine 39 is modified to N6-acetyllysine. 53–77 (LVTGGDSGIGRAAAIAYAREGADVA) provides a ligand contact to NADP(+). Substrate is bound at residue serine 186. Tyrosine 199 acts as the Proton acceptor in catalysis.

It belongs to the short-chain dehydrogenases/reductases (SDR) family.

This is an uncharacterized protein from Escherichia coli (strain K12).